The following is a 413-amino-acid chain: Short-chain specific acyl-CoA dehydrogenase, mitochondrial (413 aa).

The transit peptide at 1-24 directs the protein to the mitochondrion; the sequence is MAAALLARACGPVRGALWPRDCRR. Thr-27 bears the Phosphothreonine mark. An N6-acetyllysine; alternate modification is found at Lys-51. Lys-51 bears the N6-succinyllysine; alternate mark. N6-acetyllysine is present on Lys-72. Lys-129 is modified (N6-acetyllysine; alternate). At Lys-129 the chain carries N6-succinyllysine; alternate. Residues 152 to 161 and 185 to 187 contribute to the FAD site; these read FALSEPGNGS and WIT. Ser-161 provides a ligand contact to substrate. The residue at position 208 (Lys-208) is an N6-acetyllysine. The residue at position 262 (Lys-262) is an N6-acetyllysine; alternate. The residue at position 262 (Lys-262) is an N6-succinyllysine; alternate. 269-272 contacts substrate; that stretch reads DMGR. Residue Arg-297 participates in FAD binding. Residue Lys-306 is modified to N6-acetyllysine; alternate. Lys-306 carries the N6-succinyllysine; alternate modification. Residues Gln-308 and 366 to 370 contribute to the FAD site; that span reads QILGG. Glu-393 serves as the catalytic Proton acceptor. Gly-394 serves as a coordination point for substrate. Residue 395–397 coordinates FAD; sequence TSE.

It belongs to the acyl-CoA dehydrogenase family. As to quaternary structure, homotetramer. FAD serves as cofactor.

The protein localises to the mitochondrion matrix. It carries out the reaction a short-chain 2,3-saturated fatty acyl-CoA + oxidized [electron-transfer flavoprotein] + H(+) = a short-chain (2E)-enoyl-CoA + reduced [electron-transfer flavoprotein]. It catalyses the reaction butanoyl-CoA + oxidized [electron-transfer flavoprotein] + H(+) = (2E)-butenoyl-CoA + reduced [electron-transfer flavoprotein]. The enzyme catalyses pentanoyl-CoA + oxidized [electron-transfer flavoprotein] + H(+) = (2E)-pentenoyl-CoA + reduced [electron-transfer flavoprotein]. The catalysed reaction is hexanoyl-CoA + oxidized [electron-transfer flavoprotein] + H(+) = (2E)-hexenoyl-CoA + reduced [electron-transfer flavoprotein]. It participates in lipid metabolism; mitochondrial fatty acid beta-oxidation. Its function is as follows. Short-chain specific acyl-CoA dehydrogenase is one of the acyl-CoA dehydrogenases that catalyze the first step of mitochondrial fatty acid beta-oxidation, an aerobic process breaking down fatty acids into acetyl-CoA and allowing the production of energy from fats. The first step of fatty acid beta-oxidation consists in the removal of one hydrogen from C-2 and C-3 of the straight-chain fatty acyl-CoA thioester, resulting in the formation of trans-2-enoyl-CoA. Among the different mitochondrial acyl-CoA dehydrogenases, short-chain specific acyl-CoA dehydrogenase acts specifically on acyl-CoAs with saturated 4 to 6 carbons long primary chains. This chain is Short-chain specific acyl-CoA dehydrogenase, mitochondrial (ACADS), found in Sus scrofa (Pig).